Reading from the N-terminus, the 68-residue chain is Large ribosomal subunit protein bL35 (68 aa).

A disordered region spans residues 29-68 (GGVSHYNTKKSSKRKRQGRKPQYVPKNLEHKVKALLPNDV). Positions 35-47 (NTKKSSKRKRQGR) are enriched in basic residues.

It belongs to the bacterial ribosomal protein bL35 family.

The protein is Large ribosomal subunit protein bL35 of Sulfurihydrogenibium sp. (strain YO3AOP1).